A 230-amino-acid polypeptide reads, in one-letter code: DNA mismatch repair protein MutH (230 aa).

Belongs to the MutH family.

Its subcellular location is the cytoplasm. Sequence-specific endonuclease that cleaves unmethylated GATC sequences. It is involved in DNA mismatch repair. In Citrobacter koseri (strain ATCC BAA-895 / CDC 4225-83 / SGSC4696), this protein is DNA mismatch repair protein MutH.